The following is a 262-amino-acid chain: tRNA pseudouridine synthase A (262 aa).

D51 serves as the catalytic Nucleophile. Position 109 (Y109) interacts with substrate.

It belongs to the tRNA pseudouridine synthase TruA family. Homodimer.

The enzyme catalyses uridine(38/39/40) in tRNA = pseudouridine(38/39/40) in tRNA. Functionally, formation of pseudouridine at positions 38, 39 and 40 in the anticodon stem and loop of transfer RNAs. This Actinobacillus pleuropneumoniae serotype 3 (strain JL03) protein is tRNA pseudouridine synthase A.